Reading from the N-terminus, the 105-residue chain is UPF0145 protein HD_1349 (105 aa).

The protein belongs to the UPF0145 family.

The protein is UPF0145 protein HD_1349 of Haemophilus ducreyi (strain 35000HP / ATCC 700724).